Consider the following 628-residue polypeptide: Biosynthetic arginine decarboxylase (628 aa).

Residue K101 is modified to N6-(pyridoxal phosphate)lysine. 281 to 291 contributes to the substrate binding site; it reads VDVGGGLGVDY.

This sequence belongs to the Orn/Lys/Arg decarboxylase class-II family. SpeA subfamily. Mg(2+) is required as a cofactor. The cofactor is pyridoxal 5'-phosphate.

It carries out the reaction L-arginine + H(+) = agmatine + CO2. Its pathway is amine and polyamine biosynthesis; agmatine biosynthesis; agmatine from L-arginine: step 1/1. In terms of biological role, catalyzes the biosynthesis of agmatine from arginine. The protein is Biosynthetic arginine decarboxylase of Alkalilimnicola ehrlichii (strain ATCC BAA-1101 / DSM 17681 / MLHE-1).